Reading from the N-terminus, the 233-residue chain is Orotidine 5'-phosphate decarboxylase (233 aa).

Substrate contacts are provided by residues D11, K34, 61–70, T117, R179, Q188, G208, and R209; that span reads DLKLHDIPNT. The active-site Proton donor is K63.

The protein belongs to the OMP decarboxylase family. Type 1 subfamily. In terms of assembly, homodimer.

The catalysed reaction is orotidine 5'-phosphate + H(+) = UMP + CO2. It participates in pyrimidine metabolism; UMP biosynthesis via de novo pathway; UMP from orotate: step 2/2. Its function is as follows. Catalyzes the decarboxylation of orotidine 5'-monophosphate (OMP) to uridine 5'-monophosphate (UMP). The protein is Orotidine 5'-phosphate decarboxylase of Streptococcus pneumoniae (strain P1031).